The chain runs to 316 residues: Fe-S cluster assembly protein dre2 (316 aa).

Residues 1–128 (MAPRCLLIGT…KPEQEEPVSI (128 aa)) are N-terminal SAM-like domain. The segment at 129–208 (PLKFGKNKAN…EDDLITEADM (80 aa)) is linker. A disordered region spans residues 141 to 177 (SATNGTNGAVNPDGSVPLNLNRKRDQPEPVKPAGVGF). 4 residues coordinate [2Fe-2S] cluster: cysteine 218, cysteine 229, cysteine 232, and cysteine 234. A fe-S binding site A region spans residues 218-234 (CQPKPGKRRRACKDCTC). Residues cysteine 279, cysteine 282, cysteine 290, and cysteine 293 each coordinate [4Fe-4S] cluster. Short sequence motifs (cx2C motif) lie at residues 279-282 (CGNC) and 290-293 (CDGC). The interval 279-293 (CGNCALGDAFRCDGC) is fe-S binding site B.

The protein belongs to the anamorsin family. Monomer. Interacts with TAH18. Interacts with MIA40. Requires [2Fe-2S] cluster as cofactor. [4Fe-4S] cluster is required as a cofactor.

It is found in the cytoplasm. The protein localises to the mitochondrion intermembrane space. Its function is as follows. Component of the cytosolic iron-sulfur (Fe-S) protein assembly (CIA) machinery required for the maturation of extramitochondrial Fe-S proteins. Part of an electron transfer chain functioning in an early step of cytosolic Fe-S biogenesis, facilitating the de novo assembly of a [4Fe-4S] cluster on the scaffold complex CFD1-NBP35. Electrons are transferred to DRE2 from NADPH via the FAD- and FMN-containing protein TAH18. TAH18-DRE2 are also required for the assembly of the diferric tyrosyl radical cofactor of ribonucleotide reductase (RNR), probably by providing electrons for reduction during radical cofactor maturation in the catalytic small subunit RNR2. This Pyrenophora tritici-repentis (strain Pt-1C-BFP) (Wheat tan spot fungus) protein is Fe-S cluster assembly protein dre2.